A 102-amino-acid polypeptide reads, in one-letter code: NADH-quinone oxidoreductase subunit K (102 aa).

The next 3 helical transmembrane spans lie at alanine 6–threonine 26, leucine 31–phenylalanine 51, and valine 62–valine 82.

The protein belongs to the complex I subunit 4L family. NDH-1 is composed of 14 different subunits. Subunits NuoA, H, J, K, L, M, N constitute the membrane sector of the complex.

The protein localises to the cell membrane. It catalyses the reaction a quinone + NADH + 5 H(+)(in) = a quinol + NAD(+) + 4 H(+)(out). NDH-1 shuttles electrons from NADH, via FMN and iron-sulfur (Fe-S) centers, to quinones in the respiratory chain. The immediate electron acceptor for the enzyme in this species is believed to be ubiquinone. Couples the redox reaction to proton translocation (for every two electrons transferred, four hydrogen ions are translocated across the cytoplasmic membrane), and thus conserves the redox energy in a proton gradient. The protein is NADH-quinone oxidoreductase subunit K of Thermomicrobium roseum (strain ATCC 27502 / DSM 5159 / P-2).